Reading from the N-terminus, the 932-residue chain is Isoleucine--tRNA ligase (932 aa).

The 'HIGH' region motif lies at 59 to 69 (PYANGTIHIGH). Glu-562 is an L-isoleucyl-5'-AMP binding site. The short motif at 603–607 (KMSKS) is the 'KMSKS' region element. Lys-606 provides a ligand contact to ATP. Positions 899, 902, 915, and 918 each coordinate Zn(2+).

It belongs to the class-I aminoacyl-tRNA synthetase family. IleS type 1 subfamily. As to quaternary structure, monomer. Zn(2+) serves as cofactor.

The protein localises to the cytoplasm. The enzyme catalyses tRNA(Ile) + L-isoleucine + ATP = L-isoleucyl-tRNA(Ile) + AMP + diphosphate. Catalyzes the attachment of isoleucine to tRNA(Ile). As IleRS can inadvertently accommodate and process structurally similar amino acids such as valine, to avoid such errors it has two additional distinct tRNA(Ile)-dependent editing activities. One activity is designated as 'pretransfer' editing and involves the hydrolysis of activated Val-AMP. The other activity is designated 'posttransfer' editing and involves deacylation of mischarged Val-tRNA(Ile). This is Isoleucine--tRNA ligase from Pasteurella multocida (strain Pm70).